The chain runs to 163 residues: Ribosome maturation factor RimP (163 aa).

It belongs to the RimP family.

It localises to the cytoplasm. In terms of biological role, required for maturation of 30S ribosomal subunits. The chain is Ribosome maturation factor RimP from Polynucleobacter asymbioticus (strain DSM 18221 / CIP 109841 / QLW-P1DMWA-1) (Polynucleobacter necessarius subsp. asymbioticus).